Consider the following 832-residue polypeptide: Dolichyl-phosphate-mannose--protein mannosyltransferase 6 (832 aa).

The tract at residues 1-44 (MATGYSTGVSPFDLDENNHNDSIHHRHQNHHSQSHDSSGERDDT) is disordered. 2 N-linked (GlcNAc...) asparagine glycosylation sites follow: Asn20 and Asn59. Transmembrane regions (helical) follow at residues 135 to 155 (FYFD…GYLA), 175 to 194 (YVFM…PLAY), 206 to 227 (TCWL…SKFI), 232 to 252 (MLLF…TLAI), 266 to 286 (LEIK…SVKW), 293 to 311 (ALVG…YQTF), and 327 to 347 (LIHW…IYVA). N-linked (GlcNAc...) asparagine glycosylation is present at Asn357. The region spanning 383-437 (PRSVAFGSLVTIRSQGLSPNLIHSHPHNYPQGSQEQQVTTYGFKDDNNEFLFEFG) is the MIR 1 domain. The N-linked (GlcNAc...) asparagine glycan is linked to Asn453. 2 consecutive MIR domains span residues 466–522 (HVII…IEIQ) and 537–595 (PSEI…IEKH). A run of 4 helical transmembrane segments spans residues 676-696 (ITWI…VVGI), 723-743 (LLAA…VPFI), 755-775 (VPAL…ILNL), and 787-807 (IFKV…FWYF).

Belongs to the glycosyltransferase 39 family.

Its subcellular location is the endoplasmic reticulum membrane. It carries out the reaction a di-trans,poly-cis-dolichyl beta-D-mannosyl phosphate + L-seryl-[protein] = 3-O-(alpha-D-mannosyl)-L-seryl-[protein] + a di-trans,poly-cis-dolichyl phosphate + H(+). The enzyme catalyses a di-trans,poly-cis-dolichyl beta-D-mannosyl phosphate + L-threonyl-[protein] = 3-O-(alpha-D-mannosyl)-L-threonyl-[protein] + a di-trans,poly-cis-dolichyl phosphate + H(+). It participates in protein modification; protein glycosylation. Protein mannosyltransferase (PMT) involved in hyphal morphogenesis and drug sensitivity. Transfers mannose from Dol-P-mannose to Ser or Thr residues on proteins. PMT1, PMT2 and PMT4 account for most of the protein-O-glycosylation activity, while PMT5 and PMT6 may specifically modulate a much narrower spectrum of target proteins. Required for biofilm formation and virulence. In Candida albicans (strain SC5314 / ATCC MYA-2876) (Yeast), this protein is Dolichyl-phosphate-mannose--protein mannosyltransferase 6 (PMT6).